The following is a 285-amino-acid chain: Methyl-CpG-binding domain protein 3 (285 aa).

Residues 1 to 69 form the MBD domain; the sequence is MERKRWECPA…STFDFRTGKM (69 aa). S56 carries the phosphoserine modification. Residue K73 forms a Glycyl lysine isopeptide (Lys-Gly) (interchain with G-Cter in SUMO2) linkage. Phosphoserine is present on S85. Glycyl lysine isopeptide (Lys-Gly) (interchain with G-Cter in SUMO2) cross-links involve residues K90 and K92. S144 carries the phosphoserine modification. A coiled-coil region spans residues 221 to 279; the sequence is TDDDIRKQEELVQQVRKRLEEALMADMLAHVEELARDGEAPLDKACAEEEEEEEEEEEE. Over residues 255–267 the composition is skewed to basic and acidic residues; sequence ARDGEAPLDKACA. The interval 255–285 is disordered; the sequence is ARDGEAPLDKACAEEEEEEEEEEEEPEPERV. The segment covering 268–285 has biased composition (acidic residues); sequence EEEEEEEEEEEEPEPERV.

As to quaternary structure, heterodimer (via N-terminus) with MBD2. Component of the MeCP1 histone deacetylase complex. Component of the nucleosome remodeling and deacetylase (NuRD) repressor complex, composed of core proteins MTA1, MTA2, MTA3, RBBP4, RBBP7, HDAC1, HDAC2, MBD2, MBD3, and peripherally associated proteins CDK2AP1, CDK2AP2, GATAD2A, GATAD2B, CHD3, CHD4 and CHD5. The exact stoichiometry of the NuRD complex is unknown, and some subunits such as MBD2 and MBD3, GATAD2A and GATAD2B, and CHD3, CHD4 and CHD5 define mutually exclusive NuRD complexes. Interacts with MBD3L2 (via N-terminus); the interaction is direct. Interacts with BCL6. Interacts with CDK2AP1. Interacts with HDAC1. Interacts with MTA2. Interacts with DNMT1. Interacts with GATAD2A. Interacts with GATAD2B. Does not interact with PWWP2A. Does not interact with PWWP2B. In terms of tissue distribution, highly expressed in brain, heart, kidney, liver, lung, skeletal muscle, spleen and testis. Detected at lower levels in embryonic stem cells.

It localises to the nucleus. It is found in the chromosome. Its function is as follows. Acts as a component of the histone deacetylase NuRD complex which participates in the remodeling of chromatin. Acts as transcriptional repressor and plays a role in gene silencing. Does not bind methylated DNA by itself. Binds to a lesser degree DNA containing unmethylated CpG dinucleotides. Recruits histone deacetylases and DNA methyltransferases. The polypeptide is Methyl-CpG-binding domain protein 3 (Mbd3) (Mus musculus (Mouse)).